Consider the following 431-residue polypeptide: MTPPHFFLSLIKKRCICWICLEESTYDSTWLQHTCGCNLQIHKRCYIRWLYQMHVELFLPNTVDLPKDADLPIITCLKCLVDGHHDFMTTFSLTEIWETRPIWGQKSVPFQNDYVFNLMSLYTKRDNHPPYVLVKFGECPQCKKTNFIKRPTVTIQSSVLSLFYQWQKITRYVIPLGITSLFLLNPEKTSFDIGLWQLRCLFPENVLRNMLNISTTKALDVYAQTERGLLSIPLTSSIIIYGFIHYLSNISNVSANAILFKWVYLSIVKTAGNKYYKGIGLPKIILYSNLATFCYNFTFKRLVDLIYRRLINKGGKYLYHGNFENSSNSVPAEEFFIRRNWYAILAEKILWPFVGKCTGGLLLNAFLWIQRKFKIEWTPNCSPSEFRMIFNIIGCGTAAIGWSSLKLYASYKRCQELEKINEFIEQSCKGE.

The next 4 membrane-spanning stretches (helical) occupy residues 228-248 (GLLS…HYLS), 279-299 (IGLP…NFTF), 349-369 (ILWP…FLWI), and 388-408 (MIFN…LKLY).

The protein resides in the membrane. This is an uncharacterized protein from Saccharomyces cerevisiae (strain ATCC 204508 / S288c) (Baker's yeast).